Reading from the N-terminus, the 1313-residue chain is Histone-lysine N-methyltransferase, H3 lysine-4 specific (1313 aa).

Disordered stretches follow at residues methionine 1–arginine 205, lysine 400–histidine 458, glycine 555–leucine 607, isoleucine 667–aspartate 792, glutamate 842–glutamine 908, and alanine 932–leucine 982. Residues alanine 7 to arginine 18 show a composition bias toward low complexity. Residues alanine 19–arginine 31 are compositionally biased toward basic and acidic residues. The span at histidine 70–alanine 80 shows a compositional bias: polar residues. Residues serine 105–threonine 121 show a composition bias toward low complexity. Composition is skewed to polar residues over residues serine 130–leucine 158 and asparagine 174–aspartate 186. The span at glycine 194–serine 204 shows a compositional bias: basic and acidic residues. The span at arginine 559–leucine 607 shows a compositional bias: basic and acidic residues. Over residues arginine 702–histidine 716 the composition is skewed to basic residues. Residues methionine 758–threonine 784 are compositionally biased toward basic and acidic residues. A compositionally biased stretch (polar residues) spans leucine 843–proline 855. Residues alanine 868–arginine 884 are compositionally biased toward basic and acidic residues. Basic residues predominate over residues proline 895 to lysine 907. The segment covering leucine 960–leucine 978 has biased composition (basic and acidic residues). A RxxxRR motif motif is present at residues arginine 1137 to arginine 1142. The 118-residue stretch at lysine 1171–lysine 1288 folds into the SET domain. Residue tyrosine 1287 coordinates S-adenosyl-L-methionine. The 17-residue stretch at aspartate 1297–asparagine 1313 folds into the Post-SET domain.

Belongs to the class V-like SAM-binding methyltransferase superfamily. Component of the Set1C/COMPASS complex.

Its subcellular location is the nucleus. It is found in the chromosome. It catalyses the reaction L-lysyl(4)-[histone H3] + 3 S-adenosyl-L-methionine = N(6),N(6),N(6)-trimethyl-L-lysyl(4)-[histone H3] + 3 S-adenosyl-L-homocysteine + 3 H(+). The catalysed reaction is N(6)-methyl-L-lysyl(4)-[histone H3] + S-adenosyl-L-methionine = N(6),N(6)-dimethyl-L-lysyl(4)-[histone H3] + S-adenosyl-L-homocysteine + H(+). It carries out the reaction N(6),N(6)-dimethyl-L-lysyl(4)-[histone H3] + S-adenosyl-L-methionine = N(6),N(6),N(6)-trimethyl-L-lysyl(4)-[histone H3] + S-adenosyl-L-homocysteine + H(+). Its function is as follows. Catalytic component of the COMPASS (Set1C) complex that specifically mono-, di- and trimethylates histone H3 to form H3K4me1/2/3. Binds RNAs which might negatively affect its histone methyltransferase activity. COMPASS recognizes ubiquitinated H2B on one face of the nucleosome which stimulates the methylation of H3 on the opposing face. This is Histone-lysine N-methyltransferase, H3 lysine-4 specific (set-1) from Neurospora crassa (strain ATCC 24698 / 74-OR23-1A / CBS 708.71 / DSM 1257 / FGSC 987).